The sequence spans 92 residues: Small nuclear ribonucleoprotein E (92 aa).

The 75-residue stretch at 18–92 folds into the Sm domain; it reads INLIFRYLQN…NITLLQSVSN (75 aa).

It belongs to the snRNP Sm proteins family. As to quaternary structure, core component of the spliceosomal U1, U2, U4 and U5 small nuclear ribonucleoproteins (snRNPs), the building blocks of the spliceosome. Most spliceosomal snRNPs contain a common set of Sm proteins, SNRPB, SNRPD1, SNRPD2, SNRPD3, SNRPE, SNRPF and SNRPG that assemble in a heptameric protein ring on the Sm site of the small nuclear RNA to form the core snRNP. Component of the U1 snRNP. The U1 snRNP is composed of the U1 snRNA and the 7 core Sm proteins SNRPB, SNRPD1, SNRPD2, SNRPD3, SNRPE, SNRPF and SNRPG, and at least three U1 snRNP-specific proteins SNRNP70/U1-70K, SNRPA/U1-A and SNRPC/U1-C. Component of the U4/U6-U5 tri-snRNP complex composed of the U4, U6 and U5 snRNAs and at least PRPF3, PRPF4, PRPF6, PRPF8, PRPF31, SNRNP200, TXNL4A, SNRNP40, SNRPB, SNRPD1, SNRPD2, SNRPD3, SNRPE, SNRPF, SNRPG, DDX23, CD2BP2, PPIH, SNU13, EFTUD2, SART1 and USP39, plus LSM2, LSM3, LSM4, LSM5, LSM6, LSM7 and LSM8. Component of the U7 snRNP complex, or U7 Sm protein core complex, that is composed of the U7 snRNA and at least LSM10, LSM11, SNRPB, SNRPD3, SNRPE, SNRPF and SNRPG; the complex does not contain SNRPD1 and SNRPD2. Component of the minor spliceosome, which splices U12-type introns. Part of the SMN-Sm complex that contains SMN1, GEMIN2/SIP1, DDX20/GEMIN3, GEMIN4, GEMIN5, GEMIN6, GEMIN7, GEMIN8, STRAP/UNRIP and the Sm proteins SNRPB, SNRPD1, SNRPD2, SNRPD3, SNRPE, SNRPF and SNRPG; catalyzes core snRNPs assembly. Forms a 6S pICln-Sm complex composed of CLNS1A/pICln, SNRPD1, SNRPD2, SNRPE, SNRPF and SNRPG; ring-like structure where CLNS1A/pICln mimics additional Sm proteins and which is unable to assemble into the core snRNP. Interacts with SMN1; the interaction is direct. Interacts with GEMIN2 (via N-terminus); the interaction is direct. Interacts with SNRPF; the interaction is direct. Interacts with SNRPG; the interaction is direct.

It localises to the cytoplasm. The protein resides in the cytosol. Its subcellular location is the nucleus. Functionally, plays a role in pre-mRNA splicing as a core component of the spliceosomal U1, U2, U4 and U5 small nuclear ribonucleoproteins (snRNPs), the building blocks of the spliceosome. Component of both the pre-catalytic spliceosome B complex and activated spliceosome C complexes. As a component of the minor spliceosome, involved in the splicing of U12-type introns in pre-mRNAs. As part of the U7 snRNP it is involved in histone 3'-end processing. The chain is Small nuclear ribonucleoprotein E (SNRPE) from Bos taurus (Bovine).